The following is a 312-amino-acid chain: Ribosomal RNA small subunit methyltransferase H (312 aa).

Residues 34–36, Asp-54, Phe-78, Asp-100, and Gln-107 contribute to the S-adenosyl-L-methionine site; that span reads GGH.

This sequence belongs to the methyltransferase superfamily. RsmH family.

It is found in the cytoplasm. The enzyme catalyses cytidine(1402) in 16S rRNA + S-adenosyl-L-methionine = N(4)-methylcytidine(1402) in 16S rRNA + S-adenosyl-L-homocysteine + H(+). Functionally, specifically methylates the N4 position of cytidine in position 1402 (C1402) of 16S rRNA. This chain is Ribosomal RNA small subunit methyltransferase H, found in Salmonella choleraesuis (strain SC-B67).